A 396-amino-acid chain; its full sequence is uncharacterized protein (396 aa).

This sequence belongs to the NAD(P)-dependent epimerase/dehydratase family. NAD(+) is required as a cofactor. The cofactor is NADP(+).

Functionally, putative nucleotide sugar epimerase/dehydrogenase. This is an uncharacterized protein from Sinorhizobium fredii (strain NBRC 101917 / NGR234).